The primary structure comprises 207 residues: Probable RNA 2'-phosphotransferase (207 aa).

It belongs to the KptA/TPT1 family.

Removes the 2'-phosphate from RNA via an intermediate in which the phosphate is ADP-ribosylated by NAD followed by a presumed transesterification to release the RNA and generate ADP-ribose 1''-2''-cyclic phosphate (APPR&gt;P). May function as an ADP-ribosylase. This chain is Probable RNA 2'-phosphotransferase, found in Methanosarcina barkeri (strain Fusaro / DSM 804).